Reading from the N-terminus, the 202-residue chain is Lipid A acyltransferase PagP (202 aa).

Positions 1–25 are cleaved as a signal peptide; the sequence is MNYKDIINACILSGVFLLHSPSALA. Active-site residues include H74, D117, and S118.

Belongs to the lipid A palmitoyltransferase family. Homodimer.

Its subcellular location is the cell outer membrane. The enzyme catalyses a lipid A + a 1,2-diacyl-sn-glycero-3-phosphocholine = a hepta-acyl lipid A + a 2-acyl-sn-glycero-3-phosphocholine. The catalysed reaction is a lipid IVA + a 1,2-diacyl-sn-glycero-3-phosphocholine = a lipid IVB + a 2-acyl-sn-glycero-3-phosphocholine. It carries out the reaction a lipid IIA + a 1,2-diacyl-sn-glycero-3-phosphocholine = a lipid IIB + a 2-acyl-sn-glycero-3-phosphocholine. Functionally, transfers a fatty acid residue from the sn-1 position of a phospholipid to the N-linked hydroxyfatty acid chain on the proximal unit of lipid A or its precursors. The polypeptide is Lipid A acyltransferase PagP (Yersinia pseudotuberculosis serotype IB (strain PB1/+)).